Here is a 1542-residue protein sequence, read N- to C-terminus: MNTPDDSSVSSVDSHQPYMGFDDNVEKRIRELARSLTQQSLTSSNRSVNKEAPADGSAPLDRVSTRASSIFSADFKGVNPVFSDEEEDDYDARLDPNSDEFSSKAWVQNMAKITTGDPEFYKPYSIGCCWKDLSASGESADVSYQSTFLNLPVKLLNAVWRKARPARESDTFRILKPMDGLLKPGELLVVLGRPGSGCTTLLKSISSTTHGFQISKDSVISYNGLTPNEIKKHYRGEVVYNAEADIHLPHLTVYQTLVTVARLKTPQNRVKGVTREDFANHVTDVAMATYGLSHTRDTKVGNDLVRGVSGGERKRVSIAEVWICGSKFQCWDNATRGLDSATALEFVRALKTQAHIAKNVATVAIYQCSQDAYNLFNKVSVLYEGYQIYFGDAQHAKVYFQKMGYFCPKRQTIPDFLTSITSPAERRINKEYLDKGIKVPQTPLDMVEYWHNSEEYKQLREEIDETLAHQSEDDKEEIKEAHIAKQSKRARPSSPYVVSYMMQVKYILIRNFWRIKNSASVTLFQVFGNSAMAFILGSMFYKIQKGSSADTFYFRGAAMFFAILFNAFSSLLEIFSLYEARPITEKHRTYSLYHPSADAFASVISEIPPKIVTAILFNIIFYFLVNFRRDAGRFFFYFLINVIAVFAMSHLFRCVGSLTKTLQEAMVPASMLLLALSMYTGFAIPRTKMLGWSKWIWYINPLAYLFESLMVNEFHDRRFPCNTYIPRGGAYNDVTGTERVCASVGARPGNDYVLGDDFLKESYDYENKHKWRGFGVGMAYVIFFFFVYLILCEFNEGAKQKGEMLVFPHSVVKRMKKEGKIRDKTKMHTDKNDIENNSESITSNATNEKNMLQDTYDENADSESITSGSRGGSPQVGLSKSEAIFHWQNLCYDVPIKTEVRRILNNVDGWVKPGTLTALMGASGAGKTTLLDCLAERTTMGVITGDVMVNGRPRDTSFSRSIGYCQQQDLHLKTATVRESLRFSAYLRQPSSVSIEEKNEYVEAVIKILEMETYADAVVGVPGEGLNVEQRKRLTIGVELAAKPKLLVFLDEPTSGLDSQTAWATCQLMKKLANHGQAILCTIHQPSAMLMQEFDRLLFLQKGGQTVYFGDLGKGCKTMIKYFEDHGAHKCPPDANPAEWMLEVVGAAPGSHANQDYHEVWRNSEQFKQVKQELEQMEKELSQKELDNDEDANKEFATSLWYQFQLVCVRLFQQYWRTPDYLWSKYILTIFNQLFIGFTFFKADHTLQGLQNQMLSIFMYTVIFNPLLQQYLPTFVQQRDLYEARERPSRTFSWKAFILAQIVVEVPWNIVAGTLAYCIYYYSVGFYANASQAHQLHERGALFWLFSIAFYVYVGSLGLFVISFNEVAETAAHIGSLMFTMALSFCGVMATPDAMPRFWIFMYRVSPLTYLIDALLSTGVANVDIRCSNTELVTFTPPQGLTCGQYMTPYLNVAGTGYLTDPSATDECHFCQFSYTNDFLATVSSKYYRRWRNYGIFICFIVFDYVAGIFLYWLARVPKTNGKIAKNGKTAKVNFIRRLIPF.

A compositionally biased stretch (low complexity) spans 1–14 (MNTPDDSSVSSVDS). The disordered stretch occupies residues 1–61 (MNTPDDSSVS…APADGSAPLD (61 aa)). Residues 1–517 (MNTPDDSSVS…LIRNFWRIKN (517 aa)) lie on the Cytoplasmic side of the membrane. Residues 24–33 (NVEKRIRELA) are compositionally biased toward basic and acidic residues. Over residues 35–47 (SLTQQSLTSSNRS) the composition is skewed to polar residues. The 257-residue stretch at 153–409 (VKLLNAVWRK…FQKMGYFCPK (257 aa)) folds into the ABC transporter 1 domain. Helical transmembrane passes span 518–540 (SASV…GSMF), 552–574 (FYFR…LLEI), 603–625 (VISE…YFLV), 634–652 (FFFY…SHLF), 662–684 (LQEA…GFAI), and 773–792 (GFGV…LILC). Over 793-1220 (EFNEGAKQKG…LFQQYWRTPD (428 aa)) the chain is Cytoplasmic. A compositionally biased stretch (basic and acidic residues) spans 825-834 (TKMHTDKNDI). Residues 825–846 (TKMHTDKNDIENNSESITSNAT) are disordered. Positions 835–846 (ENNSESITSNAT) are enriched in polar residues. An ABC transporter 2 domain is found at 885–1128 (FHWQNLCYDV…MIKYFEDHGA (244 aa)). 921–928 (GASGAGKT) serves as a coordination point for ATP. 6 helical membrane passes run 1221–1241 (YLWS…FTFF), 1256–1276 (SIFM…PTFV), 1296–1316 (AFIL…GTLA), 1342–1362 (LFWL…LFVI), 1370–1390 (TAAH…GVMA), and 1495–1515 (GIFI…YWLA). Topologically, residues 1516 to 1542 (RVPKTNGKIAKNGKTAKVNFIRRLIPF) are cytoplasmic.

This sequence belongs to the ABC transporter superfamily. ABCG family. PDR (TC 3.A.1.205) subfamily. Post-translationally, phosphorylated by PKA. Dephosphorylated on glucose depletion and independently rephosphorylated during glucose exposure or under stress.

It localises to the cell membrane. In terms of biological role, pleiotropic ABC efflux transporter that confers resistance to structurally and functionally unrelated compounds including caspofungin or azoles such as fluconazole, itraconazole, posaconazole, voriconazole, and isavuconazole. Does not play a role in the azole resistance in mature biofilms. The sequence is that of Pleiotropic ABC efflux transporter of multiple drugs PDH1 from Candida glabrata (strain ATCC 2001 / BCRC 20586 / JCM 3761 / NBRC 0622 / NRRL Y-65 / CBS 138) (Yeast).